The sequence spans 236 residues: uncharacterized protein (236 aa).

Disordered regions lie at residues 1 to 48 (MHLR…RTFS), 67 to 122 (VHTP…HSPR), and 134 to 192 (KLHP…PNNT). Residues 85-99 (RAHRTAKHPARRQSC) show a composition bias toward basic residues. Residues 180–189 (PSPAIKPSPP) are compositionally biased toward pro residues.

This is an uncharacterized protein from Encephalitozoon cuniculi (strain GB-M1) (Microsporidian parasite).